A 362-amino-acid polypeptide reads, in one-letter code: Cobalt-precorrin-5B C(1)-methyltransferase (362 aa).

Belongs to the CbiD family.

It catalyses the reaction Co-precorrin-5B + S-adenosyl-L-methionine = Co-precorrin-6A + S-adenosyl-L-homocysteine. It participates in cofactor biosynthesis; adenosylcobalamin biosynthesis; cob(II)yrinate a,c-diamide from sirohydrochlorin (anaerobic route): step 6/10. In terms of biological role, catalyzes the methylation of C-1 in cobalt-precorrin-5B to form cobalt-precorrin-6A. The chain is Cobalt-precorrin-5B C(1)-methyltransferase from Geotalea daltonii (strain DSM 22248 / JCM 15807 / FRC-32) (Geobacter daltonii).